Here is a 267-residue protein sequence, read N- to C-terminus: Thiamine pyrophosphokinase 1 (267 aa).

Belongs to the thiamine pyrophosphokinase family. In terms of tissue distribution, expressed in roots, leaves and flowers.

The protein resides in the cytoplasm. It is found in the cytosol. The catalysed reaction is thiamine + ATP = thiamine diphosphate + AMP + H(+). It functions in the pathway cofactor biosynthesis; thiamine diphosphate biosynthesis; thiamine diphosphate from thiamine: step 1/1. Functionally, catalyzes the phosphorylation of thiamine to thiamine pyrophosphate (TPP). TPP is an active cofactor for enzymes involved in glycolysis and energy production. Plant leaves require high levels of TPP for photosynthesis and carbohydrate metabolism. This chain is Thiamine pyrophosphokinase 1, found in Arabidopsis thaliana (Mouse-ear cress).